Consider the following 568-residue polypeptide: Phosphoprotein (568 aa).

The segment at 1 to 24 (MDQDAFFFERDPEAEGEAPRKQES) is disordered. The segment covering 7–24 (FFERDPEAEGEAPRKQES) has biased composition (basic and acidic residues). An N0 binding region spans residues 33-41 (DVVLSYKPT). Residues 45–324 (EDRSWLHGII…ANEEETSNTS (280 aa)) form a disordered region. 3 stretches are compositionally biased toward basic and acidic residues: residues 56 to 105 (NPKE…HARI), 132 to 144 (RNTRIDEDSPNER), and 151 to 167 (LTDEDRKMAEDSNKREE). Residues 190 to 208 (RTNNNGRSMETSSTHSTRI) show a composition bias toward polar residues. Basic and acidic residues predominate over residues 239–253 (TRSERTQNSELHKST). Over residues 294 to 305 (YTMNNANNNTKS) the composition is skewed to polar residues. Residues 344–411 (FELSRSASHV…SSRDLHKRFS (68 aa)) form a multimerization region. A coiled-coil region spans residues 387–416 (EENRTLLKQIQEEINSSRDLHKRFSEYQKE). The segment at 412 to 445 (EYQKEQNSLMMANLSTLHIITDRGGKTGDPSDTT) is l protein binding. The interval 434–455 (RGGKTGDPSDTTRSPSVFTKGK) is disordered. A compositionally biased stretch (polar residues) spans 441–450 (PSDTTRSPSV). Positions 479–568 (DLIREDELRD…FEEDIDSLTN (90 aa)) are interaction with the nucleocapsid (N-RNA).

Belongs to the respirovirus P protein family. In terms of assembly, homotetramer. Interacts (via multimerization domain) with polymerase L; this interaction forms the polymerase complex. Interacts (via N-terminus) with N0; this interaction allows P to chaperon N0 before encapsidation and form the N-P complex. Interacts (via C-terminus) with N-RNA template; this interaction positions the polymerase on the template.

Its function is as follows. Essential cofactor of the RNA polymerase L that plays a central role in the transcription and replication by forming the polymerase complex with RNA polymerase L and recruiting L to the genomic N-RNA template for RNA synthesis. Also plays a central role in the encapsidation of nascent RNA chains by forming the encapsidation complex with the nucleocapsid protein N (N-P complex). Acts as a chaperone for newly synthesized free N protein, so-called N0, allowing encapsidation of nascent RNA chains during replication. The nucleoprotein protein N prevents excessive phosphorylation of P, which leads to down-regulation of viral transcription/ replication. Participates, together with N, in the formation of viral factories (viroplasms), which are large inclusions in the host cytoplasm where replication takes place. Recruits host PI4KB and remodel the host endoplasmic reticulum membrane to form viral replication factories. This is Phosphoprotein (P/C) from Human parainfluenza 1 virus (strain C35) (HPIV-1).